Here is a 375-residue protein sequence, read N- to C-terminus: Methylthioribose-1-phosphate isomerase (375 aa).

D259 (proton donor) is an active-site residue.

It belongs to the eIF-2B alpha/beta/delta subunits family. MtnA subfamily.

It localises to the cytoplasm. Its subcellular location is the nucleus. It catalyses the reaction 5-(methylsulfanyl)-alpha-D-ribose 1-phosphate = 5-(methylsulfanyl)-D-ribulose 1-phosphate. It participates in amino-acid biosynthesis; L-methionine biosynthesis via salvage pathway; L-methionine from S-methyl-5-thio-alpha-D-ribose 1-phosphate: step 1/6. Its function is as follows. Catalyzes the interconversion of methylthioribose-1-phosphate (MTR-1-P) into methylthioribulose-1-phosphate (MTRu-1-P). The polypeptide is Methylthioribose-1-phosphate isomerase (Populus trichocarpa (Western balsam poplar)).